A 351-amino-acid chain; its full sequence is S-adenosylmethionine:tRNA ribosyltransferase-isomerase (351 aa).

Belongs to the QueA family. Monomer.

The protein resides in the cytoplasm. The catalysed reaction is 7-aminomethyl-7-carbaguanosine(34) in tRNA + S-adenosyl-L-methionine = epoxyqueuosine(34) in tRNA + adenine + L-methionine + 2 H(+). It participates in tRNA modification; tRNA-queuosine biosynthesis. In terms of biological role, transfers and isomerizes the ribose moiety from AdoMet to the 7-aminomethyl group of 7-deazaguanine (preQ1-tRNA) to give epoxyqueuosine (oQ-tRNA). This Hydrogenovibrio crunogenus (strain DSM 25203 / XCL-2) (Thiomicrospira crunogena) protein is S-adenosylmethionine:tRNA ribosyltransferase-isomerase.